Reading from the N-terminus, the 149-residue chain is Lipoprotein signal peptidase (149 aa).

The next 3 helical transmembrane spans lie at 24 to 44 (SHIA…LTNL), 57 to 77 (KMWF…YLLW), and 81 to 101 (GKWL…GNFI). Catalysis depends on residues Asp111 and Asp127. Residues 122-142 (IFNFADSCLTVGVIFILIGVL) form a helical membrane-spanning segment.

This sequence belongs to the peptidase A8 family.

The protein resides in the cell membrane. It carries out the reaction Release of signal peptides from bacterial membrane prolipoproteins. Hydrolyzes -Xaa-Yaa-Zaa-|-(S,diacylglyceryl)Cys-, in which Xaa is hydrophobic (preferably Leu), and Yaa (Ala or Ser) and Zaa (Gly or Ala) have small, neutral side chains.. It functions in the pathway protein modification; lipoprotein biosynthesis (signal peptide cleavage). Functionally, this protein specifically catalyzes the removal of signal peptides from prolipoproteins. This chain is Lipoprotein signal peptidase, found in Lactiplantibacillus plantarum (strain ATCC BAA-793 / NCIMB 8826 / WCFS1) (Lactobacillus plantarum).